Reading from the N-terminus, the 179-residue chain is UPF0167 protein PA1536 (179 aa).

The protein belongs to the UPF0167 family.

In Pseudomonas aeruginosa (strain ATCC 15692 / DSM 22644 / CIP 104116 / JCM 14847 / LMG 12228 / 1C / PRS 101 / PAO1), this protein is UPF0167 protein PA1536.